The primary structure comprises 561 residues: Small ribosomal subunit protein bS1 (561 aa).

S1 motif domains are found at residues 22 to 88, 106 to 172, 193 to 261, 278 to 348, 365 to 435, and 452 to 521; these read GEVI…LSRE, GDIL…VSRR, GSVI…LGMK, GTRL…LGMK, GDKI…LGIK, and GSLV…LSVK.

Belongs to the bacterial ribosomal protein bS1 family.

In terms of biological role, binds mRNA; thus facilitating recognition of the initiation point. It is needed to translate mRNA with a short Shine-Dalgarno (SD) purine-rich sequence. In Neisseria meningitidis serogroup B (strain ATCC BAA-335 / MC58), this protein is Small ribosomal subunit protein bS1 (rpsA).